A 925-amino-acid chain; its full sequence is Isoleucine--tRNA ligase (925 aa).

Positions 57–67 (PYANGDIHMGH) match the 'HIGH' region motif. Glu556 is an L-isoleucyl-5'-AMP binding site. Residues 597–601 (KMSKS) carry the 'KMSKS' region motif. Lys600 contacts ATP. Residues Cys890, Cys893, Cys910, and Cys913 each coordinate Zn(2+).

Belongs to the class-I aminoacyl-tRNA synthetase family. IleS type 1 subfamily. In terms of assembly, monomer. Zn(2+) serves as cofactor.

Its subcellular location is the cytoplasm. The enzyme catalyses tRNA(Ile) + L-isoleucine + ATP = L-isoleucyl-tRNA(Ile) + AMP + diphosphate. Catalyzes the attachment of isoleucine to tRNA(Ile). As IleRS can inadvertently accommodate and process structurally similar amino acids such as valine, to avoid such errors it has two additional distinct tRNA(Ile)-dependent editing activities. One activity is designated as 'pretransfer' editing and involves the hydrolysis of activated Val-AMP. The other activity is designated 'posttransfer' editing and involves deacylation of mischarged Val-tRNA(Ile). The polypeptide is Isoleucine--tRNA ligase (Carboxydothermus hydrogenoformans (strain ATCC BAA-161 / DSM 6008 / Z-2901)).